The sequence spans 337 residues: tRNA N6-adenosine threonylcarbamoyltransferase (337 aa).

2 residues coordinate Fe cation: His111 and His115. Residues 134-138 (LVSGG), Asp167, Gly180, and Asn272 contribute to the substrate site. Fe cation is bound at residue Asp300.

It belongs to the KAE1 / TsaD family. Fe(2+) is required as a cofactor.

It is found in the cytoplasm. It carries out the reaction L-threonylcarbamoyladenylate + adenosine(37) in tRNA = N(6)-L-threonylcarbamoyladenosine(37) in tRNA + AMP + H(+). Required for the formation of a threonylcarbamoyl group on adenosine at position 37 (t(6)A37) in tRNAs that read codons beginning with adenine. Is involved in the transfer of the threonylcarbamoyl moiety of threonylcarbamoyl-AMP (TC-AMP) to the N6 group of A37, together with TsaE and TsaB. TsaD likely plays a direct catalytic role in this reaction. The protein is tRNA N6-adenosine threonylcarbamoyltransferase of Enterobacter sp. (strain 638).